The sequence spans 467 residues: MATGKIVQIIGAVVDVEFPQSNVPSVYDALNVTDSKERLVLEVQQQLGGGVVRCIVMGSSDGLRRGVEVVNTGAPISVPVGTKTLGRIMNVLGDAIDERGEVGAEEVYSIHRSAPSYEEQSNEIALLETGVKVIDLICPFAKGGKIGLFGGAGVGKTVNMMELINNIALQHSGLSVFAGVGERTREGNDFYYEMQEAGVVNVEKPEESKVAMVYGQMNEPPGNRLRVALTGLTMAERFRDEGRDVLLFIDNIYRYTLAGTEVSALLGRMPSAVGYQPTLAEEMGVLQERITSTKSGSITSVQAVYVPADDLTDPSPATTFAHLDATVVLNRNIAAMGLYPAIDPLDSTSRMLDPLVVGQDHYEVARGVQQTLQRYKELKDIIAILGMDELSEEDKQVVSRARKIERFLTQPYHVAEVFTGDPGIYVPLKETLRGFKGLLAGEYDDIPEQAFMYCGSIDDAIENAKKL.

Residue 150–157 (GGAGVGKT) coordinates ATP.

Belongs to the ATPase alpha/beta chains family. As to quaternary structure, F-type ATPases have 2 components, CF(1) - the catalytic core - and CF(0) - the membrane proton channel. CF(1) has five subunits: alpha(3), beta(3), gamma(1), delta(1), epsilon(1). CF(0) has three main subunits: a(1), b(2) and c(9-12). The alpha and beta chains form an alternating ring which encloses part of the gamma chain. CF(1) is attached to CF(0) by a central stalk formed by the gamma and epsilon chains, while a peripheral stalk is formed by the delta and b chains.

Its subcellular location is the cell inner membrane. The enzyme catalyses ATP + H2O + 4 H(+)(in) = ADP + phosphate + 5 H(+)(out). Produces ATP from ADP in the presence of a proton gradient across the membrane. The catalytic sites are hosted primarily by the beta subunits. The polypeptide is ATP synthase subunit beta (Vibrio alginolyticus).